We begin with the raw amino-acid sequence, 141 residues long: Methane monooxygenase regulatory protein B (141 aa).

The protein belongs to the TmoD/XamoD family. The soluble methane monooxygenase (sMMO) consists of four components A/MMOH (composed of alpha/MmoX, beta/MmoY and gamma/MmoZ), B/MMOB (MmoB), C/MMOR (MmoC) and D/MMOD (MmoD).

Its function is as follows. The B protein acts as a regulator of electron flow through the soluble mmo complex, switching the enzyme from an oxidase to a hydroxylase in the presence of the substrate. The sequence is that of Methane monooxygenase regulatory protein B (mmoB) from Methylococcus capsulatus (strain ATCC 33009 / NCIMB 11132 / Bath).